The chain runs to 325 residues: Protein SAR DEFICIENT 4 (325 aa).

A chloroplast-targeting transit peptide spans 1–42; the sequence is MAALPVFIPAESFPSILSHETLINHFRTNLPKHSSTITSPVR.

Belongs to the ornithine cyclodeaminase/mu-crystallin family.

It is found in the plastid. It localises to the chloroplast. Involved in the biosynthesis of pipecolate (Pip), a metabolite that orchestrates defense amplification, positive regulation of salicylic acid (SA) biosynthesis, and priming to guarantee effective local resistance induction and the establishment of systemic acquired resistance (SAR). Converts delta-(1)-piperideine-2-carboxylate (P2C) to Pip. Mediates reduction of P2C and biosynthesis of Pip in systemic tissue and contributes to SAR establishment. Does not possess ornithine cyclodeaminase activity in vitro. This chain is Protein SAR DEFICIENT 4, found in Arabidopsis thaliana (Mouse-ear cress).